We begin with the raw amino-acid sequence, 363 residues long: UDP-3-O-acylglucosamine N-acyltransferase (363 aa).

The active-site Proton acceptor is the histidine 266.

Belongs to the transferase hexapeptide repeat family. LpxD subfamily. As to quaternary structure, homotrimer.

It catalyses the reaction a UDP-3-O-[(3R)-3-hydroxyacyl]-alpha-D-glucosamine + a (3R)-hydroxyacyl-[ACP] = a UDP-2-N,3-O-bis[(3R)-3-hydroxyacyl]-alpha-D-glucosamine + holo-[ACP] + H(+). It participates in bacterial outer membrane biogenesis; LPS lipid A biosynthesis. In terms of biological role, catalyzes the N-acylation of UDP-3-O-acylglucosamine using 3-hydroxyacyl-ACP as the acyl donor. Is involved in the biosynthesis of lipid A, a phosphorylated glycolipid that anchors the lipopolysaccharide to the outer membrane of the cell. This is UDP-3-O-acylglucosamine N-acyltransferase from Bordetella pertussis (strain Tohama I / ATCC BAA-589 / NCTC 13251).